We begin with the raw amino-acid sequence, 87 residues long: Small ribosomal subunit protein uS15 (87 aa).

Belongs to the universal ribosomal protein uS15 family. Part of the 30S ribosomal subunit. Forms a bridge to the 50S subunit in the 70S ribosome, contacting the 23S rRNA.

Functionally, one of the primary rRNA binding proteins, it binds directly to 16S rRNA where it helps nucleate assembly of the platform of the 30S subunit by binding and bridging several RNA helices of the 16S rRNA. Forms an intersubunit bridge (bridge B4) with the 23S rRNA of the 50S subunit in the ribosome. The chain is Small ribosomal subunit protein uS15 from Cutibacterium acnes (strain DSM 16379 / KPA171202) (Propionibacterium acnes).